Here is a 1414-residue protein sequence, read N- to C-terminus: DNA-directed RNA polymerase subunit beta' (1414 aa).

The Zn(2+) site is built by Cys-70, Cys-72, Cys-85, and Cys-88. Mg(2+)-binding residues include Asp-460, Asp-462, and Asp-464. Positions 819, 893, 900, and 903 each coordinate Zn(2+). Residues 1391–1414 form a disordered region; the sequence is AEEAFDFGTPSAPAEEPQQHPAAE. A compositionally biased stretch (low complexity) spans 1400–1414; that stretch reads PSAPAEEPQQHPAAE.

It belongs to the RNA polymerase beta' chain family. The RNAP catalytic core consists of 2 alpha, 1 beta, 1 beta' and 1 omega subunit. When a sigma factor is associated with the core the holoenzyme is formed, which can initiate transcription. Mg(2+) is required as a cofactor. The cofactor is Zn(2+).

It catalyses the reaction RNA(n) + a ribonucleoside 5'-triphosphate = RNA(n+1) + diphosphate. In terms of biological role, DNA-dependent RNA polymerase catalyzes the transcription of DNA into RNA using the four ribonucleoside triphosphates as substrates. This Burkholderia lata (strain ATCC 17760 / DSM 23089 / LMG 22485 / NCIMB 9086 / R18194 / 383) protein is DNA-directed RNA polymerase subunit beta'.